We begin with the raw amino-acid sequence, 158 residues long: UPF0758 protein VC_1786 (158 aa).

An MPN domain is found at 37–158 (TFARTENTTE…SVSFAERGWL (122 aa)). Zn(2+) contacts are provided by H108, H110, and D121. The JAMM motif motif lies at 108-121 (HNHPSGDPEPSQAD).

This sequence belongs to the UPF0758 family.

The polypeptide is UPF0758 protein VC_1786 (Vibrio cholerae serotype O1 (strain ATCC 39315 / El Tor Inaba N16961)).